A 200-amino-acid polypeptide reads, in one-letter code: Ribonuclease HII (200 aa).

Positions 6–200 (ESIAGVDEVG…KLFAVHGSLT (195 aa)) constitute an RNase H type-2 domain. Asp-12, Glu-13, and Asp-108 together coordinate a divalent metal cation.

It belongs to the RNase HII family. Requires Mn(2+) as cofactor. Mg(2+) serves as cofactor.

It is found in the cytoplasm. The catalysed reaction is Endonucleolytic cleavage to 5'-phosphomonoester.. Endonuclease that specifically degrades the RNA of RNA-DNA hybrids. This chain is Ribonuclease HII, found in Prochlorococcus marinus (strain MIT 9303).